Reading from the N-terminus, the 261-residue chain is tRNA pseudouridine synthase A (261 aa).

Asp-51 (nucleophile) is an active-site residue. Tyr-109 is a substrate binding site.

Belongs to the tRNA pseudouridine synthase TruA family. Homodimer.

The enzyme catalyses uridine(38/39/40) in tRNA = pseudouridine(38/39/40) in tRNA. Its function is as follows. Formation of pseudouridine at positions 38, 39 and 40 in the anticodon stem and loop of transfer RNAs. This is tRNA pseudouridine synthase A from Shewanella amazonensis (strain ATCC BAA-1098 / SB2B).